The sequence spans 429 residues: 4-hydroxybutyrate coenzyme A transferase (429 aa).

Residue 215–219 coordinates CoA; it reads GIGAI. Glutamate 238 acts as the 5-glutamyl coenzyme A thioester intermediate in catalysis. Glycine 336 serves as a coordination point for CoA.

The protein belongs to the acetyl-CoA hydrolase/transferase family.

The chain is 4-hydroxybutyrate coenzyme A transferase (cat2) from Clostridium kluyveri (strain ATCC 8527 / DSM 555 / NBRC 12016 / NCIMB 10680 / K1).